The chain runs to 447 residues: Asparagine--tRNA ligase (447 aa).

It belongs to the class-II aminoacyl-tRNA synthetase family. Homodimer.

It is found in the cytoplasm. The enzyme catalyses tRNA(Asn) + L-asparagine + ATP = L-asparaginyl-tRNA(Asn) + AMP + diphosphate + H(+). The protein is Asparagine--tRNA ligase of Streptococcus pneumoniae serotype 4 (strain ATCC BAA-334 / TIGR4).